The sequence spans 265 residues: Neuronal membrane glycoprotein M6-b (265 aa).

The chain crosses the membrane as a helical span at residues 31–51 (GGVPYASLVATILCFSGVALF). N-linked (GlcNAc...) asparagine glycosylation occurs at Asn-73. 2 consecutive transmembrane segments (helical) span residues 90 to 110 (VIYG…AEGF) and 136 to 156 (FVFL…FSAV). A glycan (N-linked (GlcNAc...) asparagine) is linked at Asn-177. Residues 224–244 (LFIVACAGAGATVIALLIYMM) traverse the membrane as a helical segment. Ser-257 is modified (phosphoserine).

It belongs to the myelin proteolipid protein family. Interacts with SERT.

The protein localises to the membrane. Its subcellular location is the cell membrane. In terms of biological role, may be involved in neural development. Involved in regulation of osteoblast function and bone formation. Involved in matrix vesicle release by osteoblasts; this function seems to involve maintenance of the actin cytoskeleton. May be involved in cellular trafficking of SERT and thereby in regulation of serotonin uptake. In Pongo abelii (Sumatran orangutan), this protein is Neuronal membrane glycoprotein M6-b (GPM6B).